The sequence spans 295 residues: UDP-N-acetylenolpyruvoylglucosamine reductase (295 aa).

The 166-residue stretch at 23–188 (KVGGPADFLA…ISAKFALKPG (166 aa)) folds into the FAD-binding PCMH-type domain. Arg-167 is a catalytic residue. The active-site Proton donor is Ser-217. Glu-287 is an active-site residue.

It belongs to the MurB family. FAD serves as cofactor.

It is found in the cytoplasm. The enzyme catalyses UDP-N-acetyl-alpha-D-muramate + NADP(+) = UDP-N-acetyl-3-O-(1-carboxyvinyl)-alpha-D-glucosamine + NADPH + H(+). Its pathway is cell wall biogenesis; peptidoglycan biosynthesis. Cell wall formation. The sequence is that of UDP-N-acetylenolpyruvoylglucosamine reductase from Streptococcus pyogenes serotype M18 (strain MGAS8232).